The chain runs to 918 residues: Pre-pro-metalloprotease PrtV (918 aa).

An N-terminal signal peptide occupies residues 1 to 23 (MKTIKKTLLAAAIASFFSSGLYA). Positions 24-105 (QTPIDLGVVN…QKGPHKARVF (82 aa)) are excised as a propeptide. His-330 provides a ligand contact to Zn(2+). The active site involves Glu-331. His-334 contacts Zn(2+). Ca(2+) is bound by residues Ile-757, Asp-782, Asp-821, and Asp-825. PKD domains are found at residues 758–835 (APVA…TIKV) and 855–918 (VTMW…KVKL). Residues 835 to 918 (VDTPNALPQA…VTTITIKVKL (84 aa)) constitute a propeptide that is removed on maturation.

This sequence belongs to the peptidase M6 family. It depends on Zn(2+) as a cofactor. PrtV is expressed as an inactive, multidomain, 102 kDa pre-pro-metalloprotease. To form a catalytically active protease, PrtV is first secreted, and then it undergoes N- and C-terminal cleavages during envelope translocation to yield a 81 kDa pro-metalloprotease. Outside the cell, the 81 kDa pro-metalloprotease undergoes an auto-cleavage. The two major products of autoproteolysis (37 kDa and 18 kDa) together form the so called 55 kDa active complex.

The protein localises to the secreted. Calcium plays an important structural role, providing stability to this protein in the cytoplasm. Outside the cell, the decrease of the calcium concentration triggers the autoproteolysis. PrtV activity is increased by 25 mM of Sr(2+) or Mg(2+) and to some extent by Ba(2+); however, Ba(2+) inhibits PrtV at higher concentrations. Completely inhibited by EDTA and 1,10-phenanthroline. Its function is as follows. Metalloprotease that exhibits a cytotoxic effect leading to cell death. In host tissues, it could play a role in pathogenesis by modulating the stability of the extracellular matrix components such as fibronectin and fibrinogen. Also able to cleave plasminogen. The sequence is that of Pre-pro-metalloprotease PrtV from Vibrio cholerae serotype O1 (strain ATCC 39315 / El Tor Inaba N16961).